The primary structure comprises 200 residues: NAD(P)H dehydrogenase (quinone) (200 aa).

Positions 4–191 (VLVLYYSSYG…DIARYQGKHV (188 aa)) constitute a Flavodoxin-like domain. FMN contacts are provided by residues 10-15 (SSYGHV) and 79-81 (TRF). Tyr-12 contributes to the NAD(+) binding site. Trp-99 serves as a coordination point for substrate. FMN contacts are provided by residues 114–120 (STGTQHG) and His-135.

This sequence belongs to the WrbA family. It depends on FMN as a cofactor.

It carries out the reaction a quinone + NADH + H(+) = a quinol + NAD(+). It catalyses the reaction a quinone + NADPH + H(+) = a quinol + NADP(+). The polypeptide is NAD(P)H dehydrogenase (quinone) (Burkholderia cenocepacia (strain ATCC BAA-245 / DSM 16553 / LMG 16656 / NCTC 13227 / J2315 / CF5610) (Burkholderia cepacia (strain J2315))).